A 334-amino-acid chain; its full sequence is Tryptophan--tRNA ligase (334 aa).

ATP-binding positions include 11–13 (QPS) and 19–20 (GN). The short motif at 12–20 (PSGELTIGN) is the 'HIGH' region element. Asp-135 contacts L-tryptophan. Residues 147–149 (GED), Val-186, and 195–199 (KMSKS) each bind ATP. A 'KMSKS' region motif is present at residues 195 to 199 (KMSKS).

Belongs to the class-I aminoacyl-tRNA synthetase family. In terms of assembly, homodimer.

Its subcellular location is the cytoplasm. The enzyme catalyses tRNA(Trp) + L-tryptophan + ATP = L-tryptophyl-tRNA(Trp) + AMP + diphosphate + H(+). Its function is as follows. Catalyzes the attachment of tryptophan to tRNA(Trp). This Escherichia coli O157:H7 protein is Tryptophan--tRNA ligase.